A 483-amino-acid polypeptide reads, in one-letter code: Alginate biosynthesis protein AlgA (483 aa).

The protein belongs to the mannose-6-phosphate isomerase type 2 family. Monomer. Co(2+) is required as a cofactor.

It carries out the reaction D-mannose 6-phosphate = D-fructose 6-phosphate. The enzyme catalyses alpha-D-mannose 1-phosphate + GTP + H(+) = GDP-alpha-D-mannose + diphosphate. It functions in the pathway nucleotide-sugar biosynthesis; GDP-alpha-D-mannose biosynthesis; GDP-alpha-D-mannose from alpha-D-mannose 1-phosphate (GTP route): step 1/1. It participates in nucleotide-sugar biosynthesis; GDP-alpha-D-mannose biosynthesis; alpha-D-mannose 1-phosphate from D-fructose 6-phosphate: step 1/2. In terms of biological role, produces a precursor for alginate polymerization. The alginate layer provides a protective barrier against host immune defenses and antibiotics. This is Alginate biosynthesis protein AlgA (algA) from Pseudomonas fluorescens.